Here is a 341-residue protein sequence, read N- to C-terminus: Cyclic GMP-AMP synthase (341 aa).

S56 is an ATP binding site. Catalysis depends on residues D71 and D73. Position 73 (D73) interacts with Mg(2+). N109 is an ATP binding site. D123 is an active-site residue. D123 is a Mg(2+) binding site. ATP-binding residues include L192 and D238.

This sequence belongs to the CD-NTase family. B04 subfamily. In terms of assembly, monomer. Mg(2+) serves as cofactor.

The enzyme catalyses GTP + ATP = 3',3'-cGAMP + 2 diphosphate. In terms of biological role, cyclic nucleotide synthase (second messenger synthase) of a CBASS antivirus system. CBASS (cyclic oligonucleotide-based antiphage signaling system) provides immunity against bacteriophage. The CD-NTase protein synthesizes cyclic nucleotides in response to infection; these serve as specific second messenger signals. The signals activate a diverse range of effectors, leading to bacterial cell death and thus abortive phage infection. A type II-A(GA) CBASS system. Functionally, catalyzes the synthesis of 3'3'-cyclic GMP-AMP (3'3'-cGAMP) from GTP and ATP, a second messenger in cell signal transduction. May make another product. Controls the activity of the CBASS cGAMP-activated phospholipase effector protein. The chain is Cyclic GMP-AMP synthase from Bacteroides fragilis.